A 370-amino-acid chain; its full sequence is tRNA-specific 2-thiouridylase MnmA (370 aa).

ATP contacts are provided by residues 24 to 31 (AMSGGVDS) and Leu-50. Catalysis depends on Cys-118, which acts as the Nucleophile. Cys-118 and Cys-214 are oxidised to a cystine. An ATP-binding site is contributed by Gly-142. An interaction with tRNA region spans residues 164-166 (KDQ). The Cysteine persulfide intermediate role is filled by Cys-214.

Belongs to the MnmA/TRMU family.

It localises to the cytoplasm. It catalyses the reaction S-sulfanyl-L-cysteinyl-[protein] + uridine(34) in tRNA + AH2 + ATP = 2-thiouridine(34) in tRNA + L-cysteinyl-[protein] + A + AMP + diphosphate + H(+). Functionally, catalyzes the 2-thiolation of uridine at the wobble position (U34) of tRNA, leading to the formation of s(2)U34. The protein is tRNA-specific 2-thiouridylase MnmA of Ehrlichia ruminantium (strain Welgevonden).